Here is a 124-residue protein sequence, read N- to C-terminus: Fluoride-specific ion channel FluC 2 (124 aa).

Helical transmembrane passes span 36 to 56, 66 to 86, and 100 to 120; these read TFLI…YLAF, LFVM…SLDT, and LYAI…LALV. Na(+) contacts are provided by glycine 74 and threonine 77.

Belongs to the fluoride channel Fluc/FEX (TC 1.A.43) family.

Its subcellular location is the cell inner membrane. The enzyme catalyses fluoride(in) = fluoride(out). Its activity is regulated as follows. Na(+) is not transported, but it plays an essential structural role and its presence is essential for fluoride channel function. Fluoride-specific ion channel. Important for reducing fluoride concentration in the cell, thus reducing its toxicity. This chain is Fluoride-specific ion channel FluC 2, found in Nitrobacter hamburgensis (strain DSM 10229 / NCIMB 13809 / X14).